Consider the following 331-residue polypeptide: Protein RecA (331 aa).

66–73 (GPESSGKT) lines the ATP pocket.

This sequence belongs to the RecA family.

Its subcellular location is the cytoplasm. Its function is as follows. Can catalyze the hydrolysis of ATP in the presence of single-stranded DNA, the ATP-dependent uptake of single-stranded DNA by duplex DNA, and the ATP-dependent hybridization of homologous single-stranded DNAs. It interacts with LexA causing its activation and leading to its autocatalytic cleavage. This Lactobacillus delbrueckii subsp. bulgaricus (strain ATCC 11842 / DSM 20081 / BCRC 10696 / JCM 1002 / NBRC 13953 / NCIMB 11778 / NCTC 12712 / WDCM 00102 / Lb 14) protein is Protein RecA.